A 212-amino-acid polypeptide reads, in one-letter code: Pyridoxine/pyridoxamine 5'-phosphate oxidase (212 aa).

Residues 61–66 (RSVLLK), 76–77 (YT), K83, and Q105 contribute to the FMN site. K66 is a substrate binding site. Residues Y123, R127, and S131 each coordinate substrate. FMN is bound by residues 140 to 141 (QS) and W185. 191 to 193 (RLH) contacts substrate. R195 contributes to the FMN binding site.

The protein belongs to the pyridoxamine 5'-phosphate oxidase family. As to quaternary structure, homodimer. It depends on FMN as a cofactor.

The enzyme catalyses pyridoxamine 5'-phosphate + O2 + H2O = pyridoxal 5'-phosphate + H2O2 + NH4(+). The catalysed reaction is pyridoxine 5'-phosphate + O2 = pyridoxal 5'-phosphate + H2O2. It functions in the pathway cofactor metabolism; pyridoxal 5'-phosphate salvage; pyridoxal 5'-phosphate from pyridoxamine 5'-phosphate: step 1/1. Its pathway is cofactor metabolism; pyridoxal 5'-phosphate salvage; pyridoxal 5'-phosphate from pyridoxine 5'-phosphate: step 1/1. In terms of biological role, catalyzes the oxidation of either pyridoxine 5'-phosphate (PNP) or pyridoxamine 5'-phosphate (PMP) into pyridoxal 5'-phosphate (PLP). The sequence is that of Pyridoxine/pyridoxamine 5'-phosphate oxidase from Dichelobacter nodosus (strain VCS1703A).